Consider the following 303-residue polypeptide: Kynurenine formamidase (303 aa).

Residues 95-99 carry the HGGXW motif; it reads HGGYW. The active-site Nucleophile is Ser164. Catalysis depends on residues Asp247 and His279.

This sequence belongs to the kynurenine formamidase family. In terms of assembly, homodimer.

It localises to the cytoplasm. It is found in the cytosol. The protein localises to the nucleus. It carries out the reaction N-formyl-L-kynurenine + H2O = L-kynurenine + formate + H(+). The protein operates within amino-acid degradation; L-tryptophan degradation via kynurenine pathway; L-kynurenine from L-tryptophan: step 2/2. Functionally, catalyzes the hydrolysis of N-formyl-L-kynurenine to L-kynurenine, the second step in the kynurenine pathway of tryptophan degradation. Kynurenine may be further oxidized to nicotinic acid, NAD(H) and NADP(H). Required for elimination of toxic metabolites. The polypeptide is Kynurenine formamidase (Homo sapiens (Human)).